The following is a 446-amino-acid chain: Regulator of drug sensitivity 2 (446 aa).

The zn(2)-C6 fungal-type DNA-binding region spans 15–45; it reads KTCLFCKRSHVVCDKQRPCSRCVKRDIAHLC. 2 disordered regions span residues 52 to 106 and 158 to 218; these read VPNE…PKLD and ASNV…KEES. 2 stretches are compositionally biased toward polar residues: residues 56–70 and 84–96; these read MPSQHESSPNDNNIQ and DYQNEPVNKSGST. Serine 102 carries the phosphoserine modification. The span at 160-177 shows a compositional bias: polar residues; that stretch reads NVHLENGSQTTQSPLEYQ. Positions 178-192 are enriched in basic and acidic residues; it reads NDNRRDEIGVARQEN. Positions 193–206 are enriched in polar residues; that stretch reads RSPTIMSGSSNSIS. Residues 207-218 are compositionally biased toward basic and acidic residues; sequence KGDKQDQEKEES. Threonine 231 is subject to Phosphothreonine.

In terms of processing, phosphorylated by SNF1 in absence of glucose. The phosphorylation is required for induction of transcription of gluconeogenic genes.

The protein resides in the cytoplasm. It localises to the nucleus. In terms of biological role, transcription factor which regulates the expression of genes for gluconeogenesis, the TCA cycle, and glucose metabolism. Involved in the cell wall remodeling process and drug resistance. In Saccharomyces cerevisiae (strain ATCC 204508 / S288c) (Baker's yeast), this protein is Regulator of drug sensitivity 2 (RDS2).